The chain runs to 1388 residues: Endoribonuclease Dicer homolog 2 (1388 aa).

In terms of domain architecture, Helicase ATP-binding spans 31 to 210 (ALEKAIKQNT…DSYWKKIHEL (180 aa)). 44-51 (LETGSGKT) contacts ATP. Residues 152 to 155 (DECH) carry the DECH box motif. The 165-residue stretch at 380-544 (LGYSSLENIR…PLPDDSDEPL (165 aa)) folds into the Helicase C-terminal domain. The region spanning 559–645 (SVSLIYHYCS…VPDMVVAETV (87 aa)) is the Dicer dsRNA-binding fold domain. The PAZ domain occupies 805–935 (TSHEVLEKHE…LPPELCHVIL (131 aa)). RNase III domains follow at residues 962–1113 (AYNL…SEGG) and 1149–1296 (VGYM…VDSG). Mg(2+)-binding residues include Glu1188, Asp1282, and Glu1285. The region spanning 1315-1384 (TPETVKLHPV…YKEVLNLLKN (70 aa)) is the DRBM domain.

The protein belongs to the helicase family. Dicer subfamily. It depends on Mg(2+) as a cofactor. Mn(2+) is required as a cofactor.

It localises to the nucleus. It is found in the cytoplasm. Its function is as follows. Ribonuclease (RNase) III involved in RNA-mediated post-transcriptional gene silencing (PTGS). Involved in the processing of natural small interfering RNAs (nat-siRNAs, derived from cis-natural antisense transcripts) by cleaving small dsRNAs into 24 nucleotide nat-siRNAs. Plays an essential role in transitive silencing of transgenes by processing secondary siRNAs. This pathway, which requires DCL4 and RDR6, amplifies silencing by using the target RNA as substrate to generate secondary siRNAs, providing an efficient mechanism for long-distance silencing. May participate with DCL3 in the production of 24 nucleotide repeat-associated siRNAs (ra-siRNAs) which derive from heterochromatin and DNA repeats such as transposons. Plays a role in antiviral RNA silencing. Involved in the production of viral siRNAs derived from the turnip crinkle virus (TCV) and tobacco rattle virus (TRV). Targeted by the viral silencing suppressor (VSR) protein 2b of the cucumber mosaic virus (CMV) that inactivates DCL2 function in RNA silencing. Does not seem to be involved in microRNAs (miRNAs) processing. The protein is Endoribonuclease Dicer homolog 2 of Arabidopsis thaliana (Mouse-ear cress).